The sequence spans 338 residues: tRNA N6-adenosine threonylcarbamoyltransferase (338 aa).

Residues H110 and H114 each coordinate Fe cation. Residues 132–136 (LLSGG), D165, G178, and N274 contribute to the substrate site. Residue D298 participates in Fe cation binding.

It belongs to the KAE1 / TsaD family. Fe(2+) is required as a cofactor.

Its subcellular location is the cytoplasm. It carries out the reaction L-threonylcarbamoyladenylate + adenosine(37) in tRNA = N(6)-L-threonylcarbamoyladenosine(37) in tRNA + AMP + H(+). Its function is as follows. Required for the formation of a threonylcarbamoyl group on adenosine at position 37 (t(6)A37) in tRNAs that read codons beginning with adenine. Is involved in the transfer of the threonylcarbamoyl moiety of threonylcarbamoyl-AMP (TC-AMP) to the N6 group of A37, together with TsaE and TsaB. TsaD likely plays a direct catalytic role in this reaction. This Borrelia garinii subsp. bavariensis (strain ATCC BAA-2496 / DSM 23469 / PBi) (Borreliella bavariensis) protein is tRNA N6-adenosine threonylcarbamoyltransferase.